Here is a 348-residue protein sequence, read N- to C-terminus: Outer membrane protein assembly factor BamC (348 aa).

The first 24 residues, 1-24 (MATLLQTSKVMKVAGLSLVVFLAA), serve as a signal peptide directing secretion. Cys-25 is lipidated: N-palmitoyl cysteine. Cys-25 is lipidated: S-diacylglycerol cysteine. Positions 211–230 (SQQQEEAGQNNAKDSGALTV) are disordered.

It belongs to the BamC family. As to quaternary structure, part of the Bam complex, which is composed of the outer membrane protein BamA, and four lipoproteins BamB, BamC, BamD and BamE.

The protein localises to the cell outer membrane. Its function is as follows. Part of the outer membrane protein assembly complex, which is involved in assembly and insertion of beta-barrel proteins into the outer membrane. This Xenorhabdus nematophila (strain ATCC 19061 / DSM 3370 / CCUG 14189 / LMG 1036 / NCIMB 9965 / AN6) protein is Outer membrane protein assembly factor BamC.